Reading from the N-terminus, the 476-residue chain is ATP synthase subunit beta (476 aa).

Residue 153–160 (GGAGVGKT) participates in ATP binding.

The protein belongs to the ATPase alpha/beta chains family. As to quaternary structure, F-type ATPases have 2 components, CF(1) - the catalytic core - and CF(0) - the membrane proton channel. CF(1) has five subunits: alpha(3), beta(3), gamma(1), delta(1), epsilon(1). CF(0) has three main subunits: a(1), b(2) and c(9-12). The alpha and beta chains form an alternating ring which encloses part of the gamma chain. CF(1) is attached to CF(0) by a central stalk formed by the gamma and epsilon chains, while a peripheral stalk is formed by the delta and b chains.

It localises to the cell membrane. It catalyses the reaction ATP + H2O + 4 H(+)(in) = ADP + phosphate + 5 H(+)(out). Produces ATP from ADP in the presence of a proton gradient across the membrane. The catalytic sites are hosted primarily by the beta subunits. The polypeptide is ATP synthase subunit beta (Latilactobacillus sakei subsp. sakei (strain 23K) (Lactobacillus sakei subsp. sakei)).